A 94-amino-acid polypeptide reads, in one-letter code: Probable FAD-linked sulfhydryl oxidase FPV093 (94 aa).

In terms of domain architecture, ERV/ALR sulfhydryl oxidase spans 1-94 (MDPRYWGSSF…IDIKKVKKLI (94 aa)). Residues cysteine 41 and cysteine 44 are joined by a disulfide bond.

This sequence belongs to the poxviruses E10 family. The cofactor is FAD.

It carries out the reaction 2 R'C(R)SH + O2 = R'C(R)S-S(R)CR' + H2O2. Functionally, FAD-dependent sulfhydryl oxidase that catalyzes disulfide bond formation. In Fowlpox virus (strain NVSL) (FPV), this protein is Probable FAD-linked sulfhydryl oxidase FPV093.